Consider the following 359-residue polypeptide: Guanine nucleotide-binding protein subunit alpha-11 (359 aa).

Residues C9 and C10 are each lipidated (S-palmitoyl cysteine). The 322-residue stretch at 38-359 folds into the G-alpha domain; the sequence is RELKLLLLGT…QLNLKEYNLV (322 aa). The interval 41 to 54 is G1 motif; sequence KLLLLGTGESGKST. Residues 46–53 and 180–183 contribute to the GTP site; these read GTGESGKS and LRVR. S53 provides a ligand contact to Mg(2+). The interval 178 to 186 is G2 motif; that stretch reads DVLRVRVPT. T186 serves as a coordination point for Mg(2+). A G3 motif region spans residues 201-210; that stretch reads FRMVDVGGQR. A G4 motif region spans residues 270 to 277; that stretch reads ILFLNKKD. GTP is bound by residues 274–277 and A331; that span reads NKKD. The G5 motif stretch occupies residues 329-334; that stretch reads TCATDT.

Belongs to the G-alpha family. G(q) subfamily. As to quaternary structure, g proteins are composed of 3 units; alpha, beta and gamma. The alpha chain contains the guanine nucleotide binding site. Interacts with RGS22. Interacts with NTSR1.

It is found in the cell membrane. It localises to the cytoplasm. The catalysed reaction is GTP + H2O = GDP + phosphate + H(+). Functionally, guanine nucleotide-binding proteins (G proteins) function as transducers downstream of G protein-coupled receptors (GPCRs) in numerous signaling cascades. The alpha chain contains the guanine nucleotide binding site and alternates between an active, GTP-bound state and an inactive, GDP-bound state. Signaling by an activated GPCR promotes GDP release and GTP binding. The alpha subunit has a low GTPase activity that converts bound GTP to GDP, thereby terminating the signal. Both GDP release and GTP hydrolysis are modulated by numerous regulatory proteins. Signaling is mediated via phospholipase C-beta-dependent inositol lipid hydrolysis for signal propagation: activates phospholipase C-beta: following GPCR activation, GNA11 activates PLC-beta (PLCB1, PLCB2, PLCB3 or PLCB4), leading to production of diacylglycerol (DAG) and inositol 1,4,5-trisphosphate (IP3). Transduces FFAR4 signaling in response to long-chain fatty acids (LCFAs). Together with GNAQ, required for heart development. In the respiratory epithelium, transmits OXGR1-dependent signals that lead to downstream intracellular Ca(2+) release and mucocilliary clearance of airborne pathogens. This chain is Guanine nucleotide-binding protein subunit alpha-11 (Gna11), found in Rattus norvegicus (Rat).